A 169-amino-acid polypeptide reads, in one-letter code: MPLLDSFTVDHTRMNAPAVRVAKHMSTPKGDAITVFDLRFCAPNKDILSERGIHTLEHLFAGFMRDHLNGSDVEIIDISPMGCRTGFYMSLIGEPSERQVADAWLASMEDVLKVVEQSEIPELNEYQCGTYEMHSLEQAQDIARNIIAAGVSVNRNDDLKLSDEILGQL.

Fe cation is bound by residues His54, His58, and Cys128.

Belongs to the LuxS family. As to quaternary structure, homodimer. The cofactor is Fe cation.

It catalyses the reaction S-(5-deoxy-D-ribos-5-yl)-L-homocysteine = (S)-4,5-dihydroxypentane-2,3-dione + L-homocysteine. Its function is as follows. Involved in the synthesis of autoinducer 2 (AI-2) which is secreted by bacteria and is used to communicate both the cell density and the metabolic potential of the environment. The regulation of gene expression in response to changes in cell density is called quorum sensing. Catalyzes the transformation of S-ribosylhomocysteine (RHC) to homocysteine (HC) and 4,5-dihydroxy-2,3-pentadione (DPD). The sequence is that of S-ribosylhomocysteine lyase from Shewanella sp. (strain ANA-3).